Consider the following 427-residue polypeptide: Trigger factor (427 aa).

The 86-residue stretch at 163–248 folds into the PPIase FKBP-type domain; sequence GDTVVIDFVG…IHEVKAKEVP (86 aa).

The protein belongs to the FKBP-type PPIase family. Tig subfamily.

Its subcellular location is the cytoplasm. It catalyses the reaction [protein]-peptidylproline (omega=180) = [protein]-peptidylproline (omega=0). Involved in protein export. Acts as a chaperone by maintaining the newly synthesized protein in an open conformation. Functions as a peptidyl-prolyl cis-trans isomerase. This chain is Trigger factor, found in Streptococcus pneumoniae serotype 4 (strain ATCC BAA-334 / TIGR4).